Consider the following 461-residue polypeptide: FAD-dependent monooxygenase nodY2 (461 aa).

FAD-binding residues include glutamate 48 and arginine 136. Residue arginine 214 is part of the active site. FAD is bound by residues aspartate 338 and glycine 351.

This sequence belongs to the paxM FAD-dependent monooxygenase family. FAD is required as a cofactor.

It functions in the pathway secondary metabolite biosynthesis. FAD-dependent monooxygenase; part of the gene cluster that mediates the biosynthesis of the indole diterpenes nodulisporic acids (NA). Nodulisporic acid A (NAA) and its chemically modified derivatives are of particular significance because of their highly potent insecticidal activity against blood-feeding arthropods and lack of observable adverse effects on mammals, in particular the tremogenicity associated with the paspaline-derived IDTs is not observed. The geranylgeranyl diphosphate (GGPP) synthase ggs1, localized outside of the cluster, is proposed to catalyze the first step in nodulisporic acid biosynthesis via conversion of farnesyl pyrophosphate and isopentyl pyrophosphate into geranylgeranyl pyrophosphate (GGPP). Condensation of indole-3-glycerol phosphate with GGPP by the prenyl transferase nodC then forms 3-geranylgeranylindole (3-GGI). Epoxidation by the FAD-dependent monooxygenase nodM leads to a single-epoxidized-GGI that is substrate of the terpene cyclase nodB for cyclization to yield emindole SB. The terminal methyl carbon, C28, of emindole SB is then oxidized by the cytochrome P450 monooxygenase nodW to produce nodulisporic acid F (NAF), the pentacyclic core of NAA. NAF is converted to nodulisporic acid E (NAE) via prenylation. This step is probably performed by one of the indole diterpene prenyltransferases nodD1 or nodD2. Several oxidation steps performed by the FAD-linked oxidoreductase nodO and one of the cytochrome P450 monooxygenase nodR, nodX or nodZ further convert NAE to nodulisporic acid D (NAD). NAD is substrate of cytochrome P450 monooxygenase nodJ to produce the precursor of nodulisporic acid C (NAC), converted to NAC by one of the indole diterpene prenyltransferases nodD1 or nodD2. The FAD-dependent monooxygenase nodY2 then oxidizes NAC to nodulisporic acid B (NAB). Finally NAB is converted to NAA by one of the cytochrome P450 monooxygenases nodR, nodX or nodZ. This chain is FAD-dependent monooxygenase nodY2, found in Hypoxylon pulicicidum.